The primary structure comprises 1043 residues: V(D)J recombination-activating protein 1 (1043 aa).

The tract at residues 1-288 (MAASFPPTLG…LAVDFPEHFV (288 aa)) is interaction with importin alpha-1. Basic and acidic residues predominate over residues 40-54 (KTPEEAQKEKKDSFE). Residues 40 to 80 (KTPEEAQKEKKDSFEGKPSLEQSPAVLDKADGQKPVPTQPL) are disordered. A Glycyl lysine isopeptide (Lys-Gly) (interchain with G-Cter in ubiquitin) cross-link involves residue Lys234. Positions 269, 273, 293, 296, 298, 308, 310, 313, 316, 328, 331, 358, 363, 375, and 379 each coordinate Zn(2+). The segment at 293–332 (CQICEHILADPVETNCKHVFCRVCILRCLKVMGSYCPSCR) adopts an RING-type zinc-finger fold. An RAG1-type zinc finger spans residues 354–383 (LMVKCPAKECNEEVSLEKYNHHISSHKESK). Positions 392 to 459 (GGRPRQHLLS…QADELEAIMQ (68 aa)) form a DNA-binding region, NBD. Residues Asp603, Asp711, and Glu965 each contribute to the a divalent metal cation site.

This sequence belongs to the RAG1 family. In terms of assembly, homodimer. Component of the RAG complex composed of core components RAG1 and RAG2, and associated component HMGB1 or HMGB2. Interacts with DCAF1, leading to recruitment of the CUL4A-RBX1-DDB1-DCAF1/VPRBP complex to ubiquitinate proteins and limit error-prone repair during V(D)J recombination. It depends on Mg(2+) as a cofactor. Mn(2+) is required as a cofactor. In terms of processing, autoubiquitinated in the presence of CDC34/UBCH3. Maturing lymphoid cells.

The protein resides in the nucleus. The catalysed reaction is S-ubiquitinyl-[E2 ubiquitin-conjugating enzyme]-L-cysteine + [acceptor protein]-L-lysine = [E2 ubiquitin-conjugating enzyme]-L-cysteine + N(6)-ubiquitinyl-[acceptor protein]-L-lysine.. Its function is as follows. Catalytic component of the RAG complex, a multiprotein complex that mediates the DNA cleavage phase during V(D)J recombination. V(D)J recombination assembles a diverse repertoire of immunoglobulin and T-cell receptor genes in developing B and T-lymphocytes through rearrangement of different V (variable), in some cases D (diversity), and J (joining) gene segments. In the RAG complex, RAG1 mediates the DNA-binding to the conserved recombination signal sequences (RSS) and catalyzes the DNA cleavage activities by introducing a double-strand break between the RSS and the adjacent coding segment. RAG2 is not a catalytic component but is required for all known catalytic activities. DNA cleavage occurs in 2 steps: a first nick is introduced in the top strand immediately upstream of the heptamer, generating a 3'-hydroxyl group that can attack the phosphodiester bond on the opposite strand in a direct transesterification reaction, thereby creating 4 DNA ends: 2 hairpin coding ends and 2 blunt, 5'-phosphorylated ends. The chromatin structure plays an essential role in the V(D)J recombination reactions and the presence of histone H3 trimethylated at 'Lys-4' (H3K4me3) stimulates both the nicking and haipinning steps. The RAG complex also plays a role in pre-B cell allelic exclusion, a process leading to expression of a single immunoglobulin heavy chain allele to enforce clonality and monospecific recognition by the B-cell antigen receptor (BCR) expressed on individual B-lymphocytes. The introduction of DNA breaks by the RAG complex on one immunoglobulin allele induces ATM-dependent repositioning of the other allele to pericentromeric heterochromatin, preventing accessibility to the RAG complex and recombination of the second allele. In addition to its endonuclease activity, RAG1 also acts as an E3 ubiquitin-protein ligase that mediates monoubiquitination of histone H3. Histone H3 monoubiquitination is required for the joining step of V(D)J recombination. Mediates polyubiquitination of KPNA1. This is V(D)J recombination-activating protein 1 (RAG1) from Homo sapiens (Human).